A 606-amino-acid polypeptide reads, in one-letter code: Leucine-rich repeat and immunoglobulin-like domain-containing nogo receptor-interacting protein 2 (606 aa).

An N-terminal signal peptide occupies residues 1–27 (MLHTAISCWQPFLGLAVVLIFMGSTIG). The LRRNT domain occupies 28–57 (CPARCECSAQNKSVSCHRRRLIAIPEGIPI). At 28–545 (CPARCECSAQ…LDLKTILVST (518 aa)) the chain is on the extracellular side. Asparagine 38 is a glycosylation site (N-linked (GlcNAc...) asparagine). LRR repeat units lie at residues 58–79 (ETKI…EFIS), 82–103 (LLEE…AFNN), 106–127 (NLRS…VFTG), 130–151 (NLTK…MFQD), 154–175 (NLKS…AFSG), 178–199 (SLEQ…ALSH), 202–223 (SLIS…AFKR), 226–247 (HLKH…NSLY), 250–271 (NLTS…AFKH), 274–295 (YLTH…MFSD), 298–319 (RLQE…SFQG), and 322–343 (FLRV…VFSS). Asparagine 130 carries an N-linked (GlcNAc...) asparagine glycan. Asparagine 188 is a glycosylation site (N-linked (GlcNAc...) asparagine). N-linked (GlcNAc...) asparagine glycosylation is present at asparagine 279. An N-linked (GlcNAc...) asparagine glycan is attached at asparagine 327. Positions 355 to 409 (NPLACDCRLLWILQRQPTLQFGGQQPMCAGPDTIRERSFKDFHSTALSFYFTCKK) constitute an LRRCT domain. The Ig-like C2-type domain maps to 410–499 (PKIREKKLQH…GNDTFTASLT (90 aa)). An intrachain disulfide couples cysteine 432 to cysteine 483. The helical transmembrane segment at 546–566 (AMGCFTFLGVVLFCFLLLFVW) threads the bilayer. The Cytoplasmic portion of the chain corresponds to 567–606 (SRGKGKHKNSIDLEYVPRKNNGAVVEGEVAGPRRFNMKMI).

The protein resides in the membrane. This chain is Leucine-rich repeat and immunoglobulin-like domain-containing nogo receptor-interacting protein 2 (LINGO2), found in Homo sapiens (Human).